The chain runs to 461 residues: Serine carboxypeptidase-like 51 (461 aa).

The N-terminal stretch at Met-1–Gly-20 is a signal peptide. 2 N-linked (GlcNAc...) asparagine glycosylation sites follow: Asn-99 and Asn-152. Ser-166 is an active-site residue. Residue Asn-340 is glycosylated (N-linked (GlcNAc...) asparagine). Catalysis depends on residues Asp-379 and His-438.

The protein belongs to the peptidase S10 family. As to expression, expressed in seedlings, roots, flowers and siliques.

The protein localises to the secreted. Probable carboxypeptidase. The protein is Serine carboxypeptidase-like 51 (SCPL51) of Arabidopsis thaliana (Mouse-ear cress).